The following is a 101-amino-acid chain: Ubiquitin-related modifier 1 (101 aa).

The residue at position 101 (glycine 101) is a 1-thioglycine. Glycine 101 participates in a covalent cross-link: Glycyl lysine isopeptide (Gly-Lys) (interchain with K-? in acceptor proteins).

Belongs to the URM1 family. C-terminal thiocarboxylation occurs in 2 steps, it is first acyl-adenylated (-COAMP) via the hesA/moeB/thiF part of UBA4, then thiocarboxylated (-COSH) via the rhodanese domain of UBA4.

The protein localises to the cytoplasm. The protein operates within tRNA modification; 5-methoxycarbonylmethyl-2-thiouridine-tRNA biosynthesis. Functionally, acts as a sulfur carrier required for 2-thiolation of mcm(5)S(2)U at tRNA wobble positions of cytosolic tRNA(Lys), tRNA(Glu) and tRNA(Gln). Serves as sulfur donor in tRNA 2-thiolation reaction by being thiocarboxylated (-COSH) at its C-terminus by the MOCS3 homolog UBA4. The sulfur is then transferred to tRNA to form 2-thiolation of mcm(5)S(2)U. Prior mcm(5) tRNA modification by the elongator complex is required for 2-thiolation. Also acts as a ubiquitin-like protein (UBL) that is covalently conjugated via an isopeptide bond to lysine residues of target proteins such as AHP1. The thiocarboxylated form serves as substrate for conjugation and oxidative stress specifically induces the formation of UBL-protein conjugates. In Scheffersomyces stipitis (strain ATCC 58785 / CBS 6054 / NBRC 10063 / NRRL Y-11545) (Yeast), this protein is Ubiquitin-related modifier 1.